A 134-amino-acid polypeptide reads, in one-letter code: ATP synthase epsilon chain (134 aa).

The protein belongs to the ATPase epsilon chain family. In terms of assembly, F-type ATPases have 2 components, CF(1) - the catalytic core - and CF(0) - the membrane proton channel. CF(1) has five subunits: alpha(3), beta(3), gamma(1), delta(1), epsilon(1). CF(0) has three main subunits: a, b and c.

The protein resides in the cell membrane. Produces ATP from ADP in the presence of a proton gradient across the membrane. The polypeptide is ATP synthase epsilon chain (Clostridium botulinum (strain Eklund 17B / Type B)).